The primary structure comprises 641 residues: Chaperone protein DnaK 2 (641 aa).

T199 is modified (phosphothreonine; by autocatalysis). Over residues 601–616 (MAQQQAQAQHAQSSQQ) the composition is skewed to low complexity. The interval 601–641 (MAQQQAQAQHAQSSQQTNDTTGQSSTDDDVFEAEFEEVKDK) is disordered. Residues 626 to 635 (TDDDVFEAEF) are compositionally biased toward acidic residues.

It belongs to the heat shock protein 70 family.

In terms of biological role, acts as a chaperone. The chain is Chaperone protein DnaK 2 from Photobacterium profundum (strain SS9).